A 368-amino-acid polypeptide reads, in one-letter code: 4-hydroxy-3-methylbut-2-en-1-yl diphosphate synthase (flavodoxin) (368 aa).

The [4Fe-4S] cluster site is built by C268, C271, C303, and E310.

Belongs to the IspG family. The cofactor is [4Fe-4S] cluster.

The catalysed reaction is (2E)-4-hydroxy-3-methylbut-2-enyl diphosphate + oxidized [flavodoxin] + H2O + 2 H(+) = 2-C-methyl-D-erythritol 2,4-cyclic diphosphate + reduced [flavodoxin]. It functions in the pathway isoprenoid biosynthesis; isopentenyl diphosphate biosynthesis via DXP pathway; isopentenyl diphosphate from 1-deoxy-D-xylulose 5-phosphate: step 5/6. Converts 2C-methyl-D-erythritol 2,4-cyclodiphosphate (ME-2,4cPP) into 1-hydroxy-2-methyl-2-(E)-butenyl 4-diphosphate. This is 4-hydroxy-3-methylbut-2-en-1-yl diphosphate synthase (flavodoxin) from Listeria monocytogenes serotype 4b (strain F2365).